The primary structure comprises 239 residues: 2,3,4,5-tetrahydropyridine-2,6-dicarboxylate N-acetyltransferase (239 aa).

It belongs to the transferase hexapeptide repeat family. DapH subfamily.

It carries out the reaction (S)-2,3,4,5-tetrahydrodipicolinate + acetyl-CoA + H2O = L-2-acetamido-6-oxoheptanedioate + CoA. Its pathway is amino-acid biosynthesis; L-lysine biosynthesis via DAP pathway; LL-2,6-diaminopimelate from (S)-tetrahydrodipicolinate (acetylase route): step 1/3. In terms of biological role, catalyzes the transfer of an acetyl group from acetyl-CoA to tetrahydrodipicolinate. This is 2,3,4,5-tetrahydropyridine-2,6-dicarboxylate N-acetyltransferase from Staphylococcus haemolyticus (strain JCSC1435).